The chain runs to 195 residues: uncharacterized protein (195 aa).

The helical transmembrane segment at 175–195 threads the bilayer; the sequence is ILGKISGFFGSIVSTIFSLFG.

It localises to the membrane. This is an uncharacterized protein from Methanocaldococcus jannaschii (strain ATCC 43067 / DSM 2661 / JAL-1 / JCM 10045 / NBRC 100440) (Methanococcus jannaschii).